We begin with the raw amino-acid sequence, 326 residues long: Glycerol-3-phosphate dehydrogenase [NAD(P)+] (326 aa).

Residues W13, R33, and K107 each contribute to the NADPH site. Sn-glycerol 3-phosphate contacts are provided by K107, G135, and S137. A139 contacts NADPH. Sn-glycerol 3-phosphate-binding residues include K190, D243, S253, R254, and N255. K190 (proton acceptor) is an active-site residue. NADPH is bound at residue R254. Residues L273 and E275 each contribute to the NADPH site.

It belongs to the NAD-dependent glycerol-3-phosphate dehydrogenase family.

Its subcellular location is the cytoplasm. The catalysed reaction is sn-glycerol 3-phosphate + NAD(+) = dihydroxyacetone phosphate + NADH + H(+). It catalyses the reaction sn-glycerol 3-phosphate + NADP(+) = dihydroxyacetone phosphate + NADPH + H(+). It participates in membrane lipid metabolism; glycerophospholipid metabolism. Its function is as follows. Catalyzes the reduction of the glycolytic intermediate dihydroxyacetone phosphate (DHAP) to sn-glycerol 3-phosphate (G3P), the key precursor for phospholipid synthesis. The protein is Glycerol-3-phosphate dehydrogenase [NAD(P)+] of Brucella ovis (strain ATCC 25840 / 63/290 / NCTC 10512).